The following is a 490-amino-acid chain: Glutamate--tRNA ligase 1 (490 aa).

A 'HIGH' region motif is present at residues 27 to 37 (PSPTGYLHIGG). Positions 254-258 (KLSKR) match the 'KMSKS' region motif. Position 257 (Lys257) interacts with ATP.

Belongs to the class-I aminoacyl-tRNA synthetase family. Glutamate--tRNA ligase type 1 subfamily. As to quaternary structure, monomer.

It is found in the cytoplasm. It carries out the reaction tRNA(Glu) + L-glutamate + ATP = L-glutamyl-tRNA(Glu) + AMP + diphosphate. In terms of biological role, catalyzes the attachment of glutamate to tRNA(Glu) in a two-step reaction: glutamate is first activated by ATP to form Glu-AMP and then transferred to the acceptor end of tRNA(Glu). The chain is Glutamate--tRNA ligase 1 from Sphingopyxis alaskensis (strain DSM 13593 / LMG 18877 / RB2256) (Sphingomonas alaskensis).